A 664-amino-acid chain; its full sequence is MTEDHAVVRSDGGLSRRSFAAVAGTATVATALTSGVAAALPAPAASGDSRGADFDRCLAVARALLVLDSDDRPLVPRYQSVLQKGLPAQRRTRPKNVLVIGAGPAGLVAAWLLKRAGHRVTVLEANGNRAGGRVKTFRSGGHERAEQPFADPRQYAEAGAMRIPGSHPLVMELIDQFELKKRRFHYVDVDSEGRPANRTWIHVNGIRVRRADYARAPRRVNRSFGVPRAHWDTPAAAILRSVLDPVRDEFSRVGRDGKRVDKPLPERLQGWARVVQRFGDWSMFRFLTEHAGLDERTIDLIGTLENLTSRLPLSFIHSFIGSSLISPDTPFYELEGGTAVLPDALLERVRKDVRFDRRVTRIQYHHPDRPSPDVEQVRSKGPHVWVDTVSEGRDGPVVREQFTADVAVVTVPFSGLRHVQIAPPLSYGKRRAVCELHYDSATKVLLEFSRRWWEFDEADWKRELRAVDPGLYDAYRTGRAAADGSLLGAHPSVPAGHITAGQRTHYAANRAVARDQPEAVDVVGGGSVSDNANRFMFHPSHPVPGSAGGVVLASYSWADDALRWDSLDDEARYPHALCGLQQVYGQRIEVFYTGAGRTQSWLRDPYAYGEASVLLPGQHTELLSAIPVAEGPLHFAGDHTSVKPAWIEGAVESAVRAALEIHTA.

The segment at residues 1–44 is a signal peptide (tat-type signal); that stretch reads MTEDHAVVRSDGGLSRRSFAAVAGTATVATALTSGVAAALPAPA. Residues A105, E124, A125, R133, M161, R162, D638, W646, and I647 each contribute to the FAD site.

This sequence belongs to the flavin monoamine oxidase family. LGOX subfamily. In terms of assembly, the mature enzyme is a heterohexamer composed of 2 alpha chains, 2 beta chains and 2 gamma chains (alpha2beta2gamma2). The cofactor is FAD. In terms of processing, predicted to be exported by the Tat system. The position of the signal peptide cleavage has not been experimentally proven. Post-translationally, the precursor form is proteolytically cleaved by an endopeptidase into alpha, beta and gamma chains, which form the stable mature enzyme.

It is found in the secreted. The enzyme catalyses L-glutamate + O2 + H2O = H2O2 + 2-oxoglutarate + NH4(+). With respect to regulation, activity is stimulated in the presence of Mn(2+), Ca(2+) or Mg(2+). Functionally, catalyzes the oxidative deamination of L-glutamate to 2-ketoglutarate along with the production of ammonia and hydrogen peroxide. In Streptomyces viridosporus (strain ATCC 14672 / DSM 40746 / JCM 4963 / KCTC 9882 / NRRL B-12104 / FH 1290) (Streptomyces ghanaensis), this protein is L-glutamate oxidase precursor.